The following is a 703-amino-acid chain: Meiotic coiled-coil protein 2 (703 aa).

Polar residues-rich tracts occupy residues 1–19 (MQSI…SISE) and 245–258 (TNVR…STPL). Disordered stretches follow at residues 1–29 (MQSI…SELN), 245–265 (TNVR…DVDL), and 284–309 (ASTN…RSSS). The PUM-HD domain maps to 331–686 (NPSVIPESTS…KVAYLVEKWN (356 aa)). 8 Pumilio repeats span residues 361–396 (NVII…NIVD), 397–432 (SIIS…QMGS), 433–468 (AMLG…AMMD), 469–504 (ELFL…NVMN), 509–544 (ALRG…ECIE), 545–580 (EIIF…RVID), 581–616 (ALLN…LYLK), and 625–660 (RTRQ…LVIT).

The sequence is that of Meiotic coiled-coil protein 2 (mcp2) from Schizosaccharomyces pombe (strain 972 / ATCC 24843) (Fission yeast).